The sequence spans 60 residues: Large ribosomal subunit protein bL33 (60 aa).

It belongs to the bacterial ribosomal protein bL33 family.

The sequence is that of Large ribosomal subunit protein bL33 from Chlorobaculum tepidum (strain ATCC 49652 / DSM 12025 / NBRC 103806 / TLS) (Chlorobium tepidum).